Consider the following 1060-residue polypeptide: DNA-directed RNA polymerase subunit beta (1060 aa).

This sequence belongs to the RNA polymerase beta chain family. In plastids the minimal PEP RNA polymerase catalytic core is composed of four subunits: alpha, beta, beta', and beta''. When a (nuclear-encoded) sigma factor is associated with the core the holoenzyme is formed, which can initiate transcription.

It is found in the plastid. The protein localises to the chloroplast. It catalyses the reaction RNA(n) + a ribonucleoside 5'-triphosphate = RNA(n+1) + diphosphate. DNA-dependent RNA polymerase catalyzes the transcription of DNA into RNA using the four ribonucleoside triphosphates as substrates. The polypeptide is DNA-directed RNA polymerase subunit beta (Calycanthus floridus var. glaucus (Eastern sweetshrub)).